A 415-amino-acid chain; its full sequence is MHPVLRQMRPPPQQRQEQEQRQTCRAPSPSPTASGGATSAADAAADGDYEPPRRRARHYLDLEEGEGLARLGAPSPERHPRVQLKRDTREAYVPRQNLFRDREGEEPEEMRDRKFHAGRELRHGLNRERLLREEDFEPDARTGISPARAHVAAADLVTAYEQTVNQEINFQKSFNNHVRTLVAREEVAIGLMHLWDFVSALEQNPNSKPLMAQLFLIVQHSRDNEAFRDALLNIVEPEGRWLLDLINILQSIVVQERSLSLADKVAAINYSMLSLGKFYARKIYHTPYVPIDKEVKIEGFYMRMALKVLTLSDDLGVYRNERIHKAVSVSRRRELSDRELMHSLQRALAGTGSGDREAESYFDAGADLRWAPSRRALEAAGAGPGLAVAPARAGNVGGVEEYDEDDEYEPEDGEY.

Disordered regions lie at residues 1–56 (MHPV…RRRA) and 66–85 (EGLA…VQLK). The tract at residues 1–173 (MHPVLRQMRP…VNQEINFQKS (173 aa)) is interaction with packaging protein 1. Over residues 31–46 (PTASGGATSAADAAAD) the composition is skewed to low complexity. Phosphoserine; by host is present on serine 75. The segment covering 76 to 85 (PERHPRVQLK) has biased composition (basic and acidic residues). Serine 360 carries the phosphoserine; by host modification. The segment covering 381–394 (GAGPGLAVAPARAG) has biased composition (low complexity). Residues 381–415 (GAGPGLAVAPARAGNVGGVEEYDEDDEYEPEDGEY) are disordered. Acidic residues predominate over residues 400–415 (EEYDEDDEYEPEDGEY).

The protein belongs to the adenoviridae packaging protein 3 family. Part of the genome packaging complex composed of packaging proteins 1, 2 and 3; this complex specifically binds to the packaging sequence on the left end of viral genomic DNA and performs packaging of the viral genome. Interacts with hexon-linking protein IIIa; this interaction is required to promote correct genome packaging. Cleaved at different sites by the viral protease during virion maturation.

The protein resides in the host nucleus. Involved in viral genome packaging through its interaction with packaging proteins 1 and 2. After proteolytic cleavage by adenovirus protease, L1 52/55k protein is removed from the capsid during viral maturation. The chain is Packaging protein 3 from Human adenovirus C serotype 2 (HAdV-2).